Here is a 580-residue protein sequence, read N- to C-terminus: Adenine deaminase 2 (580 aa).

It belongs to the metallo-dependent hydrolases superfamily. Adenine deaminase family. Mn(2+) is required as a cofactor.

It carries out the reaction adenine + H2O + H(+) = hypoxanthine + NH4(+). In Latilactobacillus sakei subsp. sakei (strain 23K) (Lactobacillus sakei subsp. sakei), this protein is Adenine deaminase 2.